A 143-amino-acid chain; its full sequence is Large ribosomal subunit protein uL11 (143 aa).

Belongs to the universal ribosomal protein uL11 family. Part of the ribosomal stalk of the 50S ribosomal subunit. Interacts with L10 and the large rRNA to form the base of the stalk. L10 forms an elongated spine to which L12 dimers bind in a sequential fashion forming a multimeric L10(L12)X complex. In terms of processing, one or more lysine residues are methylated.

Functionally, forms part of the ribosomal stalk which helps the ribosome interact with GTP-bound translation factors. This is Large ribosomal subunit protein uL11 from Delftia acidovorans (strain DSM 14801 / SPH-1).